A 414-amino-acid polypeptide reads, in one-letter code: Sensor protein CutS (414 aa).

Over residues 1–15 the composition is skewed to pro residues; that stretch reads MATTPAPPGAPPKPT. The segment at 1-21 is disordered; sequence MATTPAPPGAPPKPTWDPRSA. 2 consecutive transmembrane segments (helical) span residues 37 to 57 and 121 to 141; these read LLYG…IYLL and SLLA…AMAG. The HAMP domain occupies 142–194; sequence RVLSPLGRITRTARAVAGSDLSRRIELDGPDDELKELADTFDDMLERLQRAFT. Positions 202-414 constitute a Histidine kinase domain; that stretch reads NASHELRTPL…GLVMRVTLPV (213 aa). His-205 is subject to Phosphohistidine; by autocatalysis.

The protein localises to the cell membrane. The enzyme catalyses ATP + protein L-histidine = ADP + protein N-phospho-L-histidine.. Functionally, member of the two-component regulatory system CutS/CutR, involved in the regulation of copper metabolism. The chain is Sensor protein CutS (cutS) from Streptomyces coelicolor (strain ATCC BAA-471 / A3(2) / M145).